Consider the following 349-residue polypeptide: Protein-glutamate methylesterase/protein-glutamine glutaminase (349 aa).

The Response regulatory domain occupies 5 to 122 (RVLCVDDSAL…REGMLAYSEL (118 aa)). Asp-56 carries the 4-aspartylphosphate modification. A CheB-type methylesterase domain is found at 152–344 (LLSSEKLIAI…QRMLAQISSG (193 aa)). Residues Ser-164, His-190, and Asp-286 contribute to the active site.

Belongs to the CheB family. In terms of processing, phosphorylated by CheA. Phosphorylation of the N-terminal regulatory domain activates the methylesterase activity.

The protein localises to the cytoplasm. It carries out the reaction [protein]-L-glutamate 5-O-methyl ester + H2O = L-glutamyl-[protein] + methanol + H(+). The catalysed reaction is L-glutaminyl-[protein] + H2O = L-glutamyl-[protein] + NH4(+). Functionally, involved in chemotaxis. Part of a chemotaxis signal transduction system that modulates chemotaxis in response to various stimuli. Catalyzes the demethylation of specific methylglutamate residues introduced into the chemoreceptors (methyl-accepting chemotaxis proteins or MCP) by CheR. Also mediates the irreversible deamidation of specific glutamine residues to glutamic acid. The sequence is that of Protein-glutamate methylesterase/protein-glutamine glutaminase from Yersinia pestis bv. Antiqua (strain Antiqua).